The following is a 785-amino-acid chain: Phenylalanine--tRNA ligase beta subunit (785 aa).

Residues 39–148 (APAFSGVVIA…ADAPVGQSIR (110 aa)) enclose the tRNA-binding domain. Residues 399–474 (PKRQAVQLRA…RVYGYNNIPA (76 aa)) enclose the B5 domain. D452, D458, E461, and E462 together coordinate Mg(2+). The region spanning 692–784 (SKFQPVRRDL…AASELGAQLR (93 aa)) is the FDX-ACB domain.

This sequence belongs to the phenylalanyl-tRNA synthetase beta subunit family. Type 1 subfamily. Tetramer of two alpha and two beta subunits. The cofactor is Mg(2+).

The protein localises to the cytoplasm. The catalysed reaction is tRNA(Phe) + L-phenylalanine + ATP = L-phenylalanyl-tRNA(Phe) + AMP + diphosphate + H(+). The sequence is that of Phenylalanine--tRNA ligase beta subunit from Chromobacterium violaceum (strain ATCC 12472 / DSM 30191 / JCM 1249 / CCUG 213 / NBRC 12614 / NCIMB 9131 / NCTC 9757 / MK).